A 220-amino-acid polypeptide reads, in one-letter code: MTLQISAQVVKALRDKTGAGMMDCKKALQANNGNEEKALESLRQKGLASANKKSNRTAIEGLLESYIHTGGRIGVLVEVNCETDFVARRPEFQKLAKDIAMQIAASPNVEYVSTQDIPSEIINLEQRVEAGKDDLKNKPVDRIETIIEGRMKKRLKELSLLDQMFIRNQDISIEDLINQNIAVLGENIKIRRFVRFLLGGGEENLKVNFADEVADILNKK.

Belongs to the EF-Ts family.

The protein localises to the plastid. Its subcellular location is the chloroplast. Associates with the EF-Tu.GDP complex and induces the exchange of GDP to GTP. It remains bound to the aminoacyl-tRNA.EF-Tu.GTP complex up to the GTP hydrolysis stage on the ribosome. The sequence is that of Elongation factor Ts, chloroplastic (tsf) from Pyropia yezoensis (Susabi-nori).